The following is a 488-amino-acid chain: Acetyl-coenzyme A carboxylase carboxyl transferase subunit beta, chloroplastic (488 aa).

A CoA carboxyltransferase N-terminal domain is found at Leu-224 to Lys-488. The Zn(2+) site is built by Cys-228, Cys-231, Cys-244, and Cys-247. The segment at Cys-228–Cys-247 adopts a C4-type zinc-finger fold.

It belongs to the AccD/PCCB family. In terms of assembly, acetyl-CoA carboxylase is a heterohexamer composed of biotin carboxyl carrier protein, biotin carboxylase and 2 subunits each of ACCase subunit alpha and ACCase plastid-coded subunit beta (accD). Requires Zn(2+) as cofactor.

The protein resides in the plastid. The protein localises to the chloroplast stroma. The enzyme catalyses N(6)-carboxybiotinyl-L-lysyl-[protein] + acetyl-CoA = N(6)-biotinyl-L-lysyl-[protein] + malonyl-CoA. It functions in the pathway lipid metabolism; malonyl-CoA biosynthesis; malonyl-CoA from acetyl-CoA: step 1/1. In terms of biological role, component of the acetyl coenzyme A carboxylase (ACC) complex. Biotin carboxylase (BC) catalyzes the carboxylation of biotin on its carrier protein (BCCP) and then the CO(2) group is transferred by the transcarboxylase to acetyl-CoA to form malonyl-CoA. In Arabis hirsuta (Hairy rock-cress), this protein is Acetyl-coenzyme A carboxylase carboxyl transferase subunit beta, chloroplastic.